The primary structure comprises 111 residues: Large ribosomal subunit protein uL22 (111 aa).

The protein belongs to the universal ribosomal protein uL22 family. Part of the 50S ribosomal subunit.

Its function is as follows. This protein binds specifically to 23S rRNA; its binding is stimulated by other ribosomal proteins, e.g. L4, L17, and L20. It is important during the early stages of 50S assembly. It makes multiple contacts with different domains of the 23S rRNA in the assembled 50S subunit and ribosome. The globular domain of the protein is located near the polypeptide exit tunnel on the outside of the subunit, while an extended beta-hairpin is found that lines the wall of the exit tunnel in the center of the 70S ribosome. The chain is Large ribosomal subunit protein uL22 from Alkalilimnicola ehrlichii (strain ATCC BAA-1101 / DSM 17681 / MLHE-1).